The primary structure comprises 769 residues: DNA gyrase subunit B (769 aa).

Residues 414 to 528 (SEIYLVEGDS…NGHIYLAQPP (115 aa)) enclose the Toprim domain. The Mg(2+) site is built by Glu420, Asp493, and Asp495.

This sequence belongs to the type II topoisomerase GyrB family. In terms of assembly, heterotetramer, composed of two GyrA and two GyrB chains. In the heterotetramer, GyrA contains the active site tyrosine that forms a transient covalent intermediate with DNA, while GyrB binds cofactors and catalyzes ATP hydrolysis. It depends on Mg(2+) as a cofactor. The cofactor is Mn(2+). Requires Ca(2+) as cofactor.

The protein localises to the cytoplasm. The catalysed reaction is ATP-dependent breakage, passage and rejoining of double-stranded DNA.. A type II topoisomerase that negatively supercoils closed circular double-stranded (ds) DNA in an ATP-dependent manner to modulate DNA topology and maintain chromosomes in an underwound state. Negative supercoiling favors strand separation, and DNA replication, transcription, recombination and repair, all of which involve strand separation. Also able to catalyze the interconversion of other topological isomers of dsDNA rings, including catenanes and knotted rings. Type II topoisomerases break and join 2 DNA strands simultaneously in an ATP-dependent manner. The protein is DNA gyrase subunit B of Campylobacter jejuni subsp. jejuni serotype O:2 (strain ATCC 700819 / NCTC 11168).